The sequence spans 247 residues: MLVVLLTAALLALSSAQGTDEEVNNAETSDVPADSEQQPVDSGSDPPSADADAENVQEGESAPPANEEPPATSGSEEEQQQQEPTQAENQEPPATSGSEEEQQQQEPTQAENQEPPATSGSEEEQQQQQPTQAENQEPPATSGSEEEQQQQESTQAENQEPSDSAGEGQETQPEEGNVESPPSSPENSQEQPQQTNPEEKPPAPKTQEEPQHYRGRPPKKIFPFFIYRGRPVVVFRLEPRNPFARRF.

The signal sequence occupies residues 1-18 (MLVVLLTAALLALSSAQG). The interval 14–219 (SSAQGTDEEV…PQHYRGRPPK (206 aa)) is disordered. 7 stretches are compositionally biased toward low complexity: residues 39-50 (PVDSGSDPPSAD), 58-71 (EGES…EPPA), 81-93 (QQEP…QEPP), 104-116 (QQEP…QEPP), 126-139 (QQQQ…QEPP), 150-159 (QQESTQAENQ), and 178-196 (VESP…QQTN). 5 consecutive repeat copies span residues 67–89 (EEPP…QAEN), 90–112 (QEPP…QAEN), 113–135 (QEPP…QAEN), 136–158 (QEPP…QAEN), and 159–181 (QEPS…VESP). The segment at 67–181 (EEPPATSGSE…QPEEGNVESP (115 aa)) is 5 X 23 AA tandem repeats. Residues 197 to 212 (PEEKPPAPKTQEEPQH) are compositionally biased toward basic and acidic residues.

As to expression, submandibular gland acinar cells.

Its subcellular location is the secreted. GRP proteins have a marked affinity for hydroxyapatite. They may play a role in the formation of the protective acquired pellicle at the saliva-tooth interface. This is Submandibular gland secretory Glx-rich protein CB (Grpcb) from Rattus norvegicus (Rat).